The chain runs to 347 residues: Twinfilin-2 (347 aa).

ADF-H domains are found at residues 3 to 137 (LVLV…RHIT) and 175 to 311 (GLAF…DEVH). Residues 314 to 347 (QHAHKQAFAKPRGPAGKRGNKRLIKGGGENGGNS) form a disordered region. Residues 338–347 (KGGGENGGNS) are compositionally biased toward gly residues.

It belongs to the actin-binding proteins ADF family. Twinfilin subfamily. As to quaternary structure, interacts with G-actin; ADP-actin form and capping protein (CP).

The protein localises to the cytoplasm. It is found in the cytoskeleton. Its subcellular location is the perinuclear region. Functionally, actin-binding protein involved in motile and morphological processes. Inhibits actin polymerization, likely by sequestering G-actin. The protein is Twinfilin-2 (twf2) of Danio rerio (Zebrafish).